A 429-amino-acid polypeptide reads, in one-letter code: Large ribosomal subunit protein mL37 (429 aa).

The transit peptide at 1-29 (MALRPVVLRRAPAHSRGILTRPGPPRPRG) directs the protein to the mitochondrion. Positions 12 to 45 (PAHSRGILTRPGPPRPRGPLPRTPWTTRGPPPDQ) are disordered. The segment covering 22–33 (PGPPRPRGPLPR) has biased composition (pro residues).

It belongs to the mitochondrion-specific ribosomal protein mL37 family. As to quaternary structure, component of the mitochondrial ribosome large subunit (39S) which comprises a 16S rRNA and about 50 distinct proteins.

The protein localises to the mitochondrion. This chain is Large ribosomal subunit protein mL37 (MRPL37), found in Gallus gallus (Chicken).